The following is a 518-amino-acid chain: MKYKDLRDFIQRLEALGELRRVTQPVSPVLEMTELCDRVLRAGGPALLFEAPPGYAFPVLGNLFGTPRRVALGMGVDAGDDAALDSLRDLGRLLSALKEPDPPRSLKDAGKLLSLAKAVWDMAPKTVSSPPCQEIVWEGADVDLHKLPIQTCWPGDAGPLVTWGLTVTRGPNKPRQNLGIYRQQLIGRNKLIMRWLAHRGGALDFREFALKNPGKPYPVAVVLGADPATTLGAVTPVPDSLSEYQFAGLLRGSRTELAKCLTPGVDTLQVPARAEIVLEGFIYPQDGTPAPAPAGAPPRPAGQAAAAYEHALEGPYGDHTGYYNEQEWFPVFTVERITMRRDAIYHSTYTGKPPDEPAILGVALNEVFVPLLQKQFAEITDFYLPPEGCSYRMAIVQMKKSYAGHAKRVMFGVWSFLRQFMYTKFIVVVDEDVNIRDWKEVIWAITTRVDPVRDTVMVDNTPIDYLDFASPVAGLGSKMGLDATNKWPGETNREWGRPIEMDAKVKARVDRLWQDIGL.

Mn(2+) is bound at residue N177. Prenylated FMN contacts are provided by residues 180-182 (IYR), 194-196 (RWL), and 199-200 (RG). E243 serves as a coordination point for Mn(2+). The Proton donor role is filled by D318.

The protein belongs to the UbiD family. Homohexamer. It depends on prenylated FMN as a cofactor. The cofactor is Mn(2+).

It is found in the cell membrane. The enzyme catalyses a 4-hydroxy-3-(all-trans-polyprenyl)benzoate + H(+) = a 2-(all-trans-polyprenyl)phenol + CO2. It participates in cofactor biosynthesis; ubiquinone biosynthesis. Functionally, catalyzes the decarboxylation of 3-octaprenyl-4-hydroxy benzoate to 2-octaprenylphenol, an intermediate step in ubiquinone biosynthesis. In Burkholderia multivorans (strain ATCC 17616 / 249), this protein is 3-octaprenyl-4-hydroxybenzoate carboxy-lyase.